The chain runs to 870 residues: Valine--tRNA ligase (870 aa).

A 'HIGH' region motif is present at residues 42-52; it reads PNVTGVLHIGH. The 'KMSKS' region motif lies at 527-531; it reads KMSKS. K530 contacts ATP. Residues 800–870 are a coiled coil; sequence LENVDLSGIL…ISVELQNLRG (71 aa).

It belongs to the class-I aminoacyl-tRNA synthetase family. ValS type 1 subfamily. In terms of assembly, monomer.

The protein localises to the cytoplasm. It catalyses the reaction tRNA(Val) + L-valine + ATP = L-valyl-tRNA(Val) + AMP + diphosphate. Catalyzes the attachment of valine to tRNA(Val). As ValRS can inadvertently accommodate and process structurally similar amino acids such as threonine, to avoid such errors, it has a 'posttransfer' editing activity that hydrolyzes mischarged Thr-tRNA(Val) in a tRNA-dependent manner. This chain is Valine--tRNA ligase, found in Campylobacter jejuni subsp. jejuni serotype O:2 (strain ATCC 700819 / NCTC 11168).